Reading from the N-terminus, the 283-residue chain is Glutamyl-Q tRNA(Asp) synthetase (283 aa).

L-glutamate contacts are provided by residues 5 to 9 (RFAPT) and E41. Positions 8–18 (PTPSGPLHLGS) match the 'HIGH' region motif. Positions 97, 99, 111, and 115 each coordinate Zn(2+). L-glutamate is bound by residues Y168 and R186. The short motif at 224 to 228 (KLSKQ) is the 'KMSKS' region element. Residue K227 participates in ATP binding.

The protein belongs to the class-I aminoacyl-tRNA synthetase family. GluQ subfamily. Zn(2+) serves as cofactor.

In terms of biological role, catalyzes the tRNA-independent activation of glutamate in presence of ATP and the subsequent transfer of glutamate onto a tRNA(Asp). Glutamate is transferred on the 2-amino-5-(4,5-dihydroxy-2-cyclopenten-1-yl) moiety of the queuosine in the wobble position of the QUC anticodon. This Idiomarina loihiensis (strain ATCC BAA-735 / DSM 15497 / L2-TR) protein is Glutamyl-Q tRNA(Asp) synthetase.